The primary structure comprises 778 residues: Double zinc ribbon and ankyrin repeat-containing protein 1 (778 aa).

A phosphoserine mark is found at S179 and S201. 2 DZANK-type zinc fingers span residues 230-289 and 359-407; these read CAHC…CVVC and CSRC…GSCG. 2 ANK repeats span residues 631–662 and 666–695; these read ENKLLLEEVGSSGKGRLSVLEQLLDEGADPNC and QGRPAVIVAVVNKHYEAIPVLAQRGADIDQ. Position 768 is a phosphoserine (S768).

As to quaternary structure, interacts with NINL. Associates with DYNC1H1 and multiple dynein intermediate and light chains as well as actin-binding proteins.

The protein resides in the cytoplasm. The protein localises to the cytoskeleton. It localises to the microtubule organizing center. It is found in the centrosome. Its subcellular location is the cilium basal body. In terms of biological role, involved in vesicle transport in photoreceptor cells. This is Double zinc ribbon and ankyrin repeat-containing protein 1 (Dzank1) from Mus musculus (Mouse).